Consider the following 370-residue polypeptide: 3-dehydroquinate synthase (370 aa).

NAD(+)-binding positions include 107-111, 131-132, K144, and K153; these read GVIGD and TS. Residues E186, H249, and H267 each contribute to the Zn(2+) site.

Belongs to the sugar phosphate cyclases superfamily. Dehydroquinate synthase family. Co(2+) serves as cofactor. Requires Zn(2+) as cofactor. NAD(+) is required as a cofactor.

It localises to the cytoplasm. It carries out the reaction 7-phospho-2-dehydro-3-deoxy-D-arabino-heptonate = 3-dehydroquinate + phosphate. It participates in metabolic intermediate biosynthesis; chorismate biosynthesis; chorismate from D-erythrose 4-phosphate and phosphoenolpyruvate: step 2/7. Its function is as follows. Catalyzes the conversion of 3-deoxy-D-arabino-heptulosonate 7-phosphate (DAHP) to dehydroquinate (DHQ). In Ruegeria pomeroyi (strain ATCC 700808 / DSM 15171 / DSS-3) (Silicibacter pomeroyi), this protein is 3-dehydroquinate synthase.